The following is a 358-amino-acid chain: 4-hydroxy-3-methylbut-2-en-1-yl diphosphate synthase (flavodoxin) (358 aa).

Residues cysteine 265, cysteine 268, cysteine 300, and glutamate 307 each coordinate [4Fe-4S] cluster.

This sequence belongs to the IspG family. It depends on [4Fe-4S] cluster as a cofactor.

The enzyme catalyses (2E)-4-hydroxy-3-methylbut-2-enyl diphosphate + oxidized [flavodoxin] + H2O + 2 H(+) = 2-C-methyl-D-erythritol 2,4-cyclic diphosphate + reduced [flavodoxin]. It participates in isoprenoid biosynthesis; isopentenyl diphosphate biosynthesis via DXP pathway; isopentenyl diphosphate from 1-deoxy-D-xylulose 5-phosphate: step 5/6. Functionally, converts 2C-methyl-D-erythritol 2,4-cyclodiphosphate (ME-2,4cPP) into 1-hydroxy-2-methyl-2-(E)-butenyl 4-diphosphate. This chain is 4-hydroxy-3-methylbut-2-en-1-yl diphosphate synthase (flavodoxin), found in Maridesulfovibrio salexigens (strain ATCC 14822 / DSM 2638 / NCIMB 8403 / VKM B-1763) (Desulfovibrio salexigens).